The sequence spans 153 residues: Ribosomal RNA large subunit methyltransferase H (153 aa).

S-adenosyl-L-methionine-binding positions include leucine 70, glycine 102, and 121 to 126 (LSAMTF).

This sequence belongs to the RNA methyltransferase RlmH family. In terms of assembly, homodimer.

It is found in the cytoplasm. It catalyses the reaction pseudouridine(1915) in 23S rRNA + S-adenosyl-L-methionine = N(3)-methylpseudouridine(1915) in 23S rRNA + S-adenosyl-L-homocysteine + H(+). In terms of biological role, specifically methylates the pseudouridine at position 1915 (m3Psi1915) in 23S rRNA. This Trichlorobacter lovleyi (strain ATCC BAA-1151 / DSM 17278 / SZ) (Geobacter lovleyi) protein is Ribosomal RNA large subunit methyltransferase H.